We begin with the raw amino-acid sequence, 366 residues long: Phenylalanine--tRNA ligase alpha subunit (366 aa).

Position 259 (glutamate 259) interacts with Mg(2+).

This sequence belongs to the class-II aminoacyl-tRNA synthetase family. Phe-tRNA synthetase alpha subunit type 1 subfamily. Tetramer of two alpha and two beta subunits. The cofactor is Mg(2+).

Its subcellular location is the cytoplasm. It carries out the reaction tRNA(Phe) + L-phenylalanine + ATP = L-phenylalanyl-tRNA(Phe) + AMP + diphosphate + H(+). The chain is Phenylalanine--tRNA ligase alpha subunit from Erythrobacter litoralis (strain HTCC2594).